The chain runs to 607 residues: Pescadillo homolog (607 aa).

The BRCT domain maps to 320-413; it reads KLKNLFKGLK…KLLPVNKYLI (94 aa). Residues 486–607 form a disordered region; the sequence is EALNSGALEE…KTQRKEILAK (122 aa). Positions 495–511 are enriched in acidic residues; the sequence is EAPEEEDDDEEAPEEDE. Positions 530-549 are enriched in basic and acidic residues; that stretch reads IFKENPSEQKKLTKQEEALR. Positions 551-562 are enriched in basic residues; the sequence is RMVKSRHKKLYR. Positions 563 to 607 are enriched in basic and acidic residues; it reads KMLEKQKKQTKEANLLKEKRQQIDKKQRVEQTQKRKTQRKEILAK.

This sequence belongs to the pescadillo family.

The protein resides in the nucleus. It is found in the nucleolus. The protein localises to the nucleoplasm. Its function is as follows. Required for maturation of ribosomal RNAs and formation of the large ribosomal subunit. The polypeptide is Pescadillo homolog (Culex quinquefasciatus (Southern house mosquito)).